Here is a 786-residue protein sequence, read N- to C-terminus: MTRYKQTEFTEDDSSSIGGIQLNEATGHTGMQIRYHTARATWNWRSRNKTEKWLLITTFVMAITIFTLLIVLFTDGGSSDATKHVLHVQPHQKDCPSGNELPCLNKHCIFASSEILKSIDVTVDPCDDFYGYSCNQWIKNNPIPEGKSTWGTFGKLEQMNQLIIRNVLEKPAKSFKSDAERKAKVYYESCLDADEHMEKLGAKPMNDLLLQIGGWNVTKSGYNVANWTMGHTLKILHNKYNFNCLFGWAIGEDDKNSSRHVIQIDQGGLTLPTADYYNNKTDNHRKVLNEYIEYMTKVCVLLGANESDARAQMIGVINFEKKLANITIPLEDRRNEEAMYHPMQLRQLSKLAPFLNWTDHFDNAMQMVGRRVTDDEVVVVYAPDFLKNLSDIILKMEQTEEGKITLNNYLVWQAVRTLTSCLSKPFRDAYKGVRKALMGSDGGEEIWRYCVSDTNNVVGFAVGAIFVRQAFHGESKPAAEQMIAEIREAFKMNLQNLTWVDKQTREKAIEKANQISDMIGFPDYILDPVELDKKYAELNITPNAYFENNIQVAIYNLKSNLKRLDQPVNKTNWGMTPQTVNAYYTPTKNQIVFPAGILQTPFFDINNPKSLNFGAMGVVMGHELTHAFDDQGREYDKFGNINRWWDSKSIERFNEKSECIARQYSGYKMNGRTLNGKQTLGENIADNGGLKAAYHAYQRTKSDRDVDILKLPGLNLTHSQLFFVSFAQVWCSSTTDETNLLQMEKDPHSPSQFRVIGTLSNMKEFAEVFQCKPGKRMNPTEKCEVW.

Residues 1–52 (MTRYKQTEFTEDDSSSIGGIQLNEATGHTGMQIRYHTARATWNWRSRNKTEK) are Cytoplasmic-facing. Residues 53-73 (WLLITTFVMAITIFTLLIVLF) traverse the membrane as a helical; Signal-anchor for type II membrane protein segment. Residues 74–786 (TDGGSSDATK…MNPTEKCEVW (713 aa)) lie on the Extracellular side of the membrane. The Peptidase M13 domain occupies 102-786 (PCLNKHCIFA…MNPTEKCEVW (685 aa)). 5 disulfide bridges follow: Cys-103-Cys-108, Cys-126-Cys-771, Cys-134-Cys-731, Cys-190-Cys-450, and Cys-659-Cys-783. Asn-216, Asn-226, Asn-256, Asn-279, Asn-305, Asn-325, Asn-356, Asn-388, Asn-496, and Asn-569 each carry an N-linked (GlcNAc...) asparagine glycan. His-622 is a binding site for Zn(2+). Residue Glu-623 is part of the active site. 2 residues coordinate Zn(2+): His-626 and Glu-682. Asp-686 functions as the Proton donor in the catalytic mechanism. An N-linked (GlcNAc...) asparagine glycan is attached at Asn-715.

This sequence belongs to the peptidase M13 family. The cofactor is Zn(2+).

Its subcellular location is the cell membrane. It catalyses the reaction Preferential cleavage of polypeptides between hydrophobic residues, particularly with Phe or Tyr at P1'.. Functionally, metalloendoprotease which is required in the dorsal paired medial neurons for the proper formation of long-term (LTM) and middle-term memories (MTM). Also required in the mushroom body neurons where it functions redundantly with neprilysins Nep2 and Nep4 in normal LTM formation. This chain is Neprilysin-3, found in Drosophila melanogaster (Fruit fly).